The sequence spans 293 residues: Elongation factor Ts (293 aa).

The interval 79-82 is involved in Mg(2+) ion dislocation from EF-Tu; sequence TDFV.

The protein belongs to the EF-Ts family.

The protein localises to the cytoplasm. Its function is as follows. Associates with the EF-Tu.GDP complex and induces the exchange of GDP to GTP. It remains bound to the aminoacyl-tRNA.EF-Tu.GTP complex up to the GTP hydrolysis stage on the ribosome. The protein is Elongation factor Ts of Macrococcus caseolyticus (strain JCSC5402) (Macrococcoides caseolyticum).